The sequence spans 224 residues: Uracil-DNA glycosylase (224 aa).

D62 (proton acceptor) is an active-site residue.

The protein belongs to the uracil-DNA glycosylase (UDG) superfamily. UNG family.

It is found in the cytoplasm. It catalyses the reaction Hydrolyzes single-stranded DNA or mismatched double-stranded DNA and polynucleotides, releasing free uracil.. Functionally, excises uracil residues from the DNA which can arise as a result of misincorporation of dUMP residues by DNA polymerase or due to deamination of cytosine. In Aliivibrio fischeri (strain ATCC 700601 / ES114) (Vibrio fischeri), this protein is Uracil-DNA glycosylase.